Reading from the N-terminus, the 336-residue chain is Dihydroorotate dehydrogenase (quinone) (336 aa).

FMN is bound by residues 62-66 (AGLDK) and T86. Substrate is bound at residue K66. 111–115 (NRMGF) provides a ligand contact to substrate. The FMN site is built by N139 and N172. N172 is a substrate binding site. S175 serves as the catalytic Nucleophile. N177 contributes to the substrate binding site. Positions 217 and 245 each coordinate FMN. A substrate-binding site is contributed by 246 to 247 (NT). Residues G268, G297, and 318-319 (YS) each bind FMN.

Belongs to the dihydroorotate dehydrogenase family. Type 2 subfamily. In terms of assembly, monomer. The cofactor is FMN.

The protein localises to the cell membrane. The enzyme catalyses (S)-dihydroorotate + a quinone = orotate + a quinol. Its pathway is pyrimidine metabolism; UMP biosynthesis via de novo pathway; orotate from (S)-dihydroorotate (quinone route): step 1/1. Its function is as follows. Catalyzes the conversion of dihydroorotate to orotate with quinone as electron acceptor. The polypeptide is Dihydroorotate dehydrogenase (quinone) (Proteus mirabilis (strain HI4320)).